Here is a 432-residue protein sequence, read N- to C-terminus: G-protein coupled receptor 22 (432 aa).

Residues 1–45 (MCFSPVLEINMQSESNVTVRDDIDDIDTNMYQPLSYPLSFQVSLT) are Extracellular-facing. An N-linked (GlcNAc...) asparagine glycan is attached at asparagine 16. A helical membrane pass occupies residues 46 to 66 (GFLMLEIVLGLGSNLTVLVLY). Residues 67–85 (CMKSNLINSVSNIITMNLH) are Cytoplasmic-facing. The helical transmembrane segment at 86–106 (VLDVIICVGCIPLTIVILLLS) threads the bilayer. The Extracellular portion of the chain corresponds to 107-115 (LESNTALIC). The chain crosses the membrane as a helical span at residues 116–136 (CFHEACVSFASVSTAINVFAI). The Cytoplasmic segment spans residues 137 to 156 (TLDRYDISVKPANRILTMGR). The chain crosses the membrane as a helical span at residues 157–177 (AVMLMTSIWIFSFFSFLIPFI). Residues 178–208 (EVNFFSLQSGNTWANKTLLCVSTSEYYTELG) are Extracellular-facing. N-linked (GlcNAc...) asparagine glycosylation occurs at asparagine 192. The chain crosses the membrane as a helical span at residues 209–229 (MYYHLLVQIPIFFFTVIVMLI). The Cytoplasmic portion of the chain corresponds to 230 to 314 (TYTKILQALN…ERQKRVFKMS (85 aa)). Residues 315 to 335 (LLIISTFLLCWTPISVLNTTI) traverse the membrane as a helical segment. Topologically, residues 336 to 348 (LCLGPSDLLVKLR) are extracellular. The helical transmembrane segment at 349–369 (LCFLVMAYGTTIFHPLLYAFT) threads the bilayer. Residues 370-432 (RQKFQKVLKS…KCLVPQVVTD (63 aa)) are Cytoplasmic-facing.

This sequence belongs to the G-protein coupled receptor 1 family. In terms of tissue distribution, abundant levels detected in the brain and heart and no detectable expression in other peripheral tissues.

It is found in the cell membrane. Orphan G-protein coupled receptor. Seems to act through a G(i)/G(o) mediated pathway. May be involved in ciliogenesis. The polypeptide is G-protein coupled receptor 22 (Gpr22) (Mus musculus (Mouse)).